Consider the following 377-residue polypeptide: Bradyzoite pseudokinase 1 (377 aa).

Residues 1 to 26 (MANTSVRRRQLLSSVLLLQWLTTVLG) form the signal peptide. The disordered stretch occupies residues 39–58 (HGQFPSLRRTEGVSQSGSGH). The 307-residue stretch at 48–354 (TEGVSQSGSG…IEEIMKDPLF (307 aa)) folds into the Protein kinase domain.

Belongs to the protein kinase superfamily. STE Ser/Thr protein kinase family. WNG subfamily. In terms of assembly, forms a complex composed of BPK1, MCP4, MAG1, GRA8 and GRA9. Interacts with MCP4. Interacts with MAG1. Interacts with GRA8. Interacts with GRA9.

The protein resides in the secreted. Required for the growth, maintenance, and/or stability, and thus infectivity, of bradyzoite cysts. This is Bradyzoite pseudokinase 1 from Toxoplasma gondii.